A 312-amino-acid polypeptide reads, in one-letter code: DNA-directed RNA polymerase subunit alpha (312 aa).

Residues 1 to 229 (MLQYQIDRID…ELFQPLATVT (229 aa)) are alpha N-terminal domain (alpha-NTD). An alpha C-terminal domain (alpha-CTD) region spans residues 246–312 (IPLEELNLSV…ISIPQSRTSV (67 aa)).

This sequence belongs to the RNA polymerase alpha chain family. In terms of assembly, in cyanobacteria the RNAP catalytic core is composed of 2 alpha, 1 beta, 1 beta', 1 gamma and 1 omega subunit. When a sigma factor is associated with the core the holoenzyme is formed, which can initiate transcription.

It carries out the reaction RNA(n) + a ribonucleoside 5'-triphosphate = RNA(n+1) + diphosphate. Functionally, DNA-dependent RNA polymerase catalyzes the transcription of DNA into RNA using the four ribonucleoside triphosphates as substrates. In Prochlorococcus marinus subsp. pastoris (strain CCMP1986 / NIES-2087 / MED4), this protein is DNA-directed RNA polymerase subunit alpha.